We begin with the raw amino-acid sequence, 444 residues long: Putative F-box protein At1g64540 (444 aa).

Residues 4–50 enclose the F-box domain; it reads REFISNLPDEILGKILSLLPTKLGVSTSVLSKRWRNLILLVDNFDLE.

This Arabidopsis thaliana (Mouse-ear cress) protein is Putative F-box protein At1g64540.